A 269-amino-acid chain; its full sequence is Glutamate racemase (269 aa).

Residues Asp13–Ser14 and Tyr45–Ser46 each bind substrate. Residue Cys77 is the Proton donor/acceptor of the active site. Asn78–Thr79 lines the substrate pocket. Cys188 (proton donor/acceptor) is an active-site residue. Thr189–His190 is a binding site for substrate.

It belongs to the aspartate/glutamate racemases family.

The enzyme catalyses L-glutamate = D-glutamate. Its pathway is cell wall biogenesis; peptidoglycan biosynthesis. Functionally, provides the (R)-glutamate required for cell wall biosynthesis. The sequence is that of Glutamate racemase from Pasteurella multocida (strain Pm70).